The sequence spans 348 residues: RNA 3'-terminal phosphate cyclase (348 aa).

ATP-binding positions include Q107 and 290–294; that span reads HLADQ. Catalysis depends on H316, which acts as the Tele-AMP-histidine intermediate.

This sequence belongs to the RNA 3'-terminal cyclase family. Type 1 subfamily.

Its subcellular location is the cytoplasm. It catalyses the reaction a 3'-end 3'-phospho-ribonucleotide-RNA + ATP = a 3'-end 2',3'-cyclophospho-ribonucleotide-RNA + AMP + diphosphate. Catalyzes the conversion of 3'-phosphate to a 2',3'-cyclic phosphodiester at the end of RNA. The mechanism of action of the enzyme occurs in 3 steps: (A) adenylation of the enzyme by ATP; (B) transfer of adenylate to an RNA-N3'P to produce RNA-N3'PP5'A; (C) and attack of the adjacent 2'-hydroxyl on the 3'-phosphorus in the diester linkage to produce the cyclic end product. The biological role of this enzyme is unknown but it is likely to function in some aspects of cellular RNA processing. This Trichormus variabilis (strain ATCC 29413 / PCC 7937) (Anabaena variabilis) protein is RNA 3'-terminal phosphate cyclase.